Consider the following 396-residue polypeptide: Na(+)/H(+) antiporter NhaA 1 (396 aa).

A run of 11 helical transmembrane segments spans residues 18 to 38, 60 to 80, 95 to 115, 126 to 146, 155 to 175, 178 to 198, 201 to 221, 262 to 282, 295 to 315, 333 to 353, and 362 to 382; these read LLLI…LSWL, LLLW…GLEV, IALP…IYTG, GWAI…ALLG, LFLL…IALF, ADLS…LFIL, TGVT…ICVL, VAYG…LAGI, IAAG…WIGV, GMAV…TLAL, and AARL…YYLL.

It belongs to the NhaA Na(+)/H(+) (TC 2.A.33) antiporter family.

The protein resides in the cell inner membrane. The catalysed reaction is Na(+)(in) + 2 H(+)(out) = Na(+)(out) + 2 H(+)(in). Its function is as follows. Na(+)/H(+) antiporter that extrudes sodium in exchange for external protons. The sequence is that of Na(+)/H(+) antiporter NhaA 1 from Syntrophotalea carbinolica (strain DSM 2380 / NBRC 103641 / GraBd1) (Pelobacter carbinolicus).